We begin with the raw amino-acid sequence, 841 residues long: Translation initiation factor IF-2 (841 aa).

Basic and acidic residues-rich tracts occupy residues 1–12 (MSDNEIKNEAPK), 52–92 (ALKA…EATK), 114–170 (EQPK…REEA), 188–202 (READ…EANR), and 213–235 (KKGD…DVKG). Disordered regions lie at residues 1–24 (MSDN…KTTV) and 52–246 (ALKA…GSAL). The region spanning 340–510 (TRAPVVTIMG…LLQSEVLELT (171 aa)) is the tr-type G domain. Positions 349–356 (GHVDHGKT) are G1. 349–356 (GHVDHGKT) is a GTP binding site. The G2 stretch occupies residues 374-378 (GITQH). The interval 396 to 399 (DTPG) is G3. GTP-binding positions include 396–400 (DTPGH) and 450–453 (NKID). Residues 450-453 (NKID) form a G4 region. Residues 486-488 (SAK) form a G5 region.

The protein belongs to the TRAFAC class translation factor GTPase superfamily. Classic translation factor GTPase family. IF-2 subfamily.

Its subcellular location is the cytoplasm. In terms of biological role, one of the essential components for the initiation of protein synthesis. Protects formylmethionyl-tRNA from spontaneous hydrolysis and promotes its binding to the 30S ribosomal subunits. Also involved in the hydrolysis of GTP during the formation of the 70S ribosomal complex. This Actinobacillus pleuropneumoniae serotype 5b (strain L20) protein is Translation initiation factor IF-2.